A 136-amino-acid polypeptide reads, in one-letter code: Small ribosomal subunit protein uS11c (136 aa).

Residues methionine 1 to lysine 22 form a disordered region.

Belongs to the universal ribosomal protein uS11 family. Part of the 30S ribosomal subunit.

Its subcellular location is the plastid. It localises to the chloroplast. This chain is Small ribosomal subunit protein uS11c, found in Lactuca sativa (Garden lettuce).